A 498-amino-acid chain; its full sequence is ATP synthase subunit beta, chloroplastic (498 aa).

172–179 (GGAGVGKT) contributes to the ATP binding site.

The protein belongs to the ATPase alpha/beta chains family. As to quaternary structure, F-type ATPases have 2 components, CF(1) - the catalytic core - and CF(0) - the membrane proton channel. CF(1) has five subunits: alpha(3), beta(3), gamma(1), delta(1), epsilon(1). CF(0) has four main subunits: a(1), b(1), b'(1) and c(9-12).

Its subcellular location is the plastid. The protein localises to the chloroplast thylakoid membrane. It catalyses the reaction ATP + H2O + 4 H(+)(in) = ADP + phosphate + 5 H(+)(out). In terms of biological role, produces ATP from ADP in the presence of a proton gradient across the membrane. The catalytic sites are hosted primarily by the beta subunits. This is ATP synthase subunit beta, chloroplastic from Nypa fruticans (Nypa palm).